The primary structure comprises 130 residues: Small ribosomal subunit protein uS9 (130 aa).

The protein belongs to the universal ribosomal protein uS9 family.

This is Small ribosomal subunit protein uS9 from Buchnera aphidicola subsp. Acyrthosiphon pisum (strain Tuc7).